Here is a 153-residue protein sequence, read N- to C-terminus: Protein SprT-like (153 aa).

Residues 6 to 148 enclose the SprT-like domain; the sequence is LQQLTEQLSL…CGKCGGKIKE (143 aa). Residue H67 coordinates Zn(2+). The active site involves E68. Position 71 (H71) interacts with Zn(2+).

Belongs to the SprT family. Zn(2+) serves as cofactor.

It localises to the cytoplasm. The protein is Protein SprT-like of Bacillus licheniformis (strain ATCC 14580 / DSM 13 / JCM 2505 / CCUG 7422 / NBRC 12200 / NCIMB 9375 / NCTC 10341 / NRRL NRS-1264 / Gibson 46).